Consider the following 1083-residue polypeptide: Error-prone DNA polymerase (1083 aa).

This sequence belongs to the DNA polymerase type-C family. DnaE2 subfamily.

The protein resides in the cytoplasm. It catalyses the reaction DNA(n) + a 2'-deoxyribonucleoside 5'-triphosphate = DNA(n+1) + diphosphate. Functionally, DNA polymerase involved in damage-induced mutagenesis and translesion synthesis (TLS). It is not the major replicative DNA polymerase. The polypeptide is Error-prone DNA polymerase (Xanthomonas axonopodis pv. citri (strain 306)).